We begin with the raw amino-acid sequence, 369 residues long: Maltose/maltodextrin import ATP-binding protein MalK (369 aa).

Residues 4-234 (VTLRNVCKSY…PKNRFVAGFI (231 aa)) form the ABC transporter domain. Residue 36–43 (GPSGCGKS) coordinates ATP.

The protein belongs to the ABC transporter superfamily. Maltooligosaccharide importer (TC 3.A.1.1.1) family. As to quaternary structure, the complex is composed of two ATP-binding proteins (MalK), two transmembrane proteins (MalG and MalK) and a solute-binding protein (MalE).

Its subcellular location is the cell inner membrane. It carries out the reaction D-maltose(out) + ATP + H2O = D-maltose(in) + ADP + phosphate + H(+). In terms of biological role, part of the ABC transporter complex MalEFGK involved in maltose/maltodextrin import. Responsible for energy coupling to the transport system. The polypeptide is Maltose/maltodextrin import ATP-binding protein MalK (Aliivibrio fischeri (strain ATCC 700601 / ES114) (Vibrio fischeri)).